Consider the following 344-residue polypeptide: Anthranilate phosphoribosyltransferase (344 aa).

Residues Gly-80, 83 to 84 (GD), Thr-88, 90 to 93 (NVST), 108 to 116 (KHGNRSVSS), and Ser-120 each bind 5-phospho-alpha-D-ribose 1-diphosphate. Gly-80 is a binding site for anthranilate. Position 92 (Ser-92) interacts with Mg(2+). Position 111 (Asn-111) interacts with anthranilate. An anthranilate-binding site is contributed by Arg-166. Mg(2+) is bound by residues Asp-225 and Glu-226.

The protein belongs to the anthranilate phosphoribosyltransferase family. Homodimer. The cofactor is Mg(2+).

The enzyme catalyses N-(5-phospho-beta-D-ribosyl)anthranilate + diphosphate = 5-phospho-alpha-D-ribose 1-diphosphate + anthranilate. It functions in the pathway amino-acid biosynthesis; L-tryptophan biosynthesis; L-tryptophan from chorismate: step 2/5. Its function is as follows. Catalyzes the transfer of the phosphoribosyl group of 5-phosphorylribose-1-pyrophosphate (PRPP) to anthranilate to yield N-(5'-phosphoribosyl)-anthranilate (PRA). The protein is Anthranilate phosphoribosyltransferase of Legionella pneumophila (strain Paris).